The chain runs to 421 residues: Probable tRNA N6-adenosine threonylcarbamoyltransferase, mitochondrial (421 aa).

A mitochondrion-targeting transit peptide spans 1–22 (MNIPKILNNNLVLKRIFCRNYS). A divalent metal cation contacts are provided by His133 and His137. Residues 156-160 (LLSGG), Asp189, Gly208, Glu212, 308-309 (AN), and Thr336 contribute to the substrate site. Asp337 is an a divalent metal cation binding site.

This sequence belongs to the KAE1 / TsaD family. Homodimer. A divalent metal cation is required as a cofactor.

The protein localises to the mitochondrion. The enzyme catalyses L-threonylcarbamoyladenylate + adenosine(37) in tRNA = N(6)-L-threonylcarbamoyladenosine(37) in tRNA + AMP + H(+). In terms of biological role, required for the formation of a threonylcarbamoyl group on adenosine at position 37 (t(6)A37) in mitochondrial tRNAs that read codons beginning with adenine. Probably involved in the transfer of the threonylcarbamoyl moiety of threonylcarbamoyl-AMP (TC-AMP) to the N6 group of A37. Involved in mitochondrial genome maintenance. This Caenorhabditis elegans protein is Probable tRNA N6-adenosine threonylcarbamoyltransferase, mitochondrial.